Reading from the N-terminus, the 124-residue chain is Fluoride-specific ion channel FluC (124 aa).

The next 4 membrane-spanning stretches (helical) occupy residues 3–23 (VLLIFLGCGAGGVARYGVSNL), 34–54 (IGTLIVNITGSLLMGILFIFI), 68–88 (LLLIGFLGGYTTFSSFSIETF), and 100–120 (ALNVLLSVALCIAGAWLGVLI). Na(+) is bound by residues Gly-75 and Thr-78.

Belongs to the fluoride channel Fluc/FEX (TC 1.A.43) family.

Its subcellular location is the cell inner membrane. The catalysed reaction is fluoride(in) = fluoride(out). Its activity is regulated as follows. Na(+) is not transported, but it plays an essential structural role and its presence is essential for fluoride channel function. Functionally, fluoride-specific ion channel. Important for reducing fluoride concentration in the cell, thus reducing its toxicity. The protein is Fluoride-specific ion channel FluC of Coxiella burnetii (strain CbuK_Q154) (Coxiella burnetii (strain Q154)).